A 317-amino-acid polypeptide reads, in one-letter code: UV DNA damage endonuclease (317 aa).

This sequence belongs to the uve1/UvsE family.

In terms of biological role, component in a DNA repair pathway. Removal of UV LIGHT damaged nucleotides. Recognizes pyrimidine dimers and cleave a phosphodiester bond immediately 5' to the lesion. The chain is UV DNA damage endonuclease from Bacillus thuringiensis subsp. konkukian (strain 97-27).